A 769-amino-acid polypeptide reads, in one-letter code: Zinc finger protein 585B (769 aa).

The span at 1 to 12 shows a compositional bias: polar residues; the sequence is MPASWTSPQKSS. The interval 1–23 is disordered; that stretch reads MPASWTSPQKSSALAPDDHGSSY. Residues 27 to 97 enclose the KRAB domain; it reads VSFRDVVINF…QGERPRHSCP (71 aa). 21 C2H2-type zinc fingers span residues 158–180, 186–208, 214–236, 242–264, 270–292, 298–320, 354–376, 382–404, 410–432, 438–460, 466–488, 494–516, 522–544, 550–572, 578–600, 606–628, 634–656, 662–684, 690–712, 718–740, and 746–768; these read YVCIECGRAFVQKPEFITHQKAH, YKCNECGKSVFQVSSLFRHQRIH, YQCSECGKGFPYNSDLSIHEKIH, HECTDCGKAFTQRSTLKMHQKIH, YICIECGQAFIQKTQLIAHRRIH, YECNNCGKSFISKSQLEVHQRIH, SICTECGKAFTYRSELIIHQRIH, YACSDCGKAFTQKSTLTVHQRIH, YVCMKCGLAFIRKAHLVTHQIIH, YKCGHCGKLFTSKSQLHVHKRIH, YVCNKCGKAFTNRSDLITHQKTH, YICSKCGKAFTQRSDLITHQRIH, YECNTCGKAFTQKSNLNIHQKIH, YECHECGKAFNQKSILIVHQKIH, YVCTECGRAFIRKSNFITHQRIH, YECSDCGKSFTSKSQLLVHQPLH, YVCAECGKAFSGRSNLSKHQKTH, YICSECGKTFRQKSELITHHRIH, YECSDCGKSFTKKSQLQVHQRIH, YVCAECGKAFSNRSNLNKHQTTH, and YKCGICGKGFVQKSVFSVHQGSH.

Belongs to the krueppel C2H2-type zinc-finger protein family.

The protein resides in the nucleus. May be involved in transcriptional regulation. In Pongo abelii (Sumatran orangutan), this protein is Zinc finger protein 585B (ZNF585B).